The following is a 267-amino-acid chain: REH2-associated factor 2 (267 aa).

Component of the REH2-associated complex (REH2C) composed of helicase REH2, associated factors H2F1 and H2F2, and mRNAs at various editing stages; the formation of the complex is RNA-independent. Interacts with various editing complexes including the RNA editing core (RECC) complex, the gRNA-binding (GRBC) complex (also known as the MRB1 complex) and the RNA editing mediator (REMC) complex.

It localises to the mitochondrion. In terms of biological role, may play a role in mitochondrial mRNA editing by facilitating the association of the gRNA-binding (GRBC) complex with the RNA editing core (RECC) complex. However, appears to be dispensable for mRNA editing per se. The protein is REH2-associated factor 2 of Trypanosoma brucei brucei (strain 927/4 GUTat10.1).